A 418-amino-acid polypeptide reads, in one-letter code: Putative F-box protein At3g23950 (418 aa).

Residues 1–42 (MNIPPELTFEVLVRLPLKSLARFRSMCKEWKLVIDSEFFRDC) enclose the F-box domain.

This Arabidopsis thaliana (Mouse-ear cress) protein is Putative F-box protein At3g23950.